Consider the following 210-residue polypeptide: Thymidylate kinase (210 aa).

10–17 is an ATP binding site; the sequence is GLEGAGKS.

This sequence belongs to the thymidylate kinase family.

The catalysed reaction is dTMP + ATP = dTDP + ADP. In terms of biological role, phosphorylation of dTMP to form dTDP in both de novo and salvage pathways of dTTP synthesis. The protein is Thymidylate kinase of Haemophilus influenzae (strain PittEE).